Reading from the N-terminus, the 327-residue chain is MKKIIKVEAVEKHFGNQVIIPPLSLDIKEGEFLTILGPSGCGKTTLLRMIAGFETPTKGNLLLDDERINDLPPYKRHMNLVFQHYALFPHMTVEKNICFGMKMQKVSAAEQKERAEEAMRLTQLLEFRNRKPAKLSGGQQQRVAIARAIVNNPRVLLLDEPLGALDFKLRKDLQRELKNLQRNLGITFIYVTHDQEEAMSMSDRIVVMNKGHIEQIGTPKEIYNKPKTLFVATFIGENNIVKNGEGYVAIRPENVKVRSVEEPILKEYHLGHIEDIEFVGNMEKLYVRDEKTSELLMAYQTAEEAAQWSIGDNVYVGWEQEDEVTLN.

Residues 5–235 (IKVEAVEKHF…PKTLFVATFI (231 aa)) form the ABC transporter domain. Residue 37–44 (GPSGCGKT) coordinates ATP.

It belongs to the ABC transporter superfamily. Spermidine/putrescine importer (TC 3.A.1.11.1) family. The complex is composed of two ATP-binding proteins (PotA), two transmembrane proteins (PotB and PotC) and a solute-binding protein (PotD).

The protein resides in the cell membrane. The catalysed reaction is ATP + H2O + polyamine-[polyamine-binding protein]Side 1 = ADP + phosphate + polyamineSide 2 + [polyamine-binding protein]Side 1.. Its function is as follows. Part of the ABC transporter complex PotABCD involved in spermidine/putrescine import. Responsible for energy coupling to the transport system. The protein is Spermidine/putrescine import ATP-binding protein PotA of Bacillus cereus (strain ATCC 14579 / DSM 31 / CCUG 7414 / JCM 2152 / NBRC 15305 / NCIMB 9373 / NCTC 2599 / NRRL B-3711).